We begin with the raw amino-acid sequence, 297 residues long: Heme A synthase (297 aa).

At 1–6 (MNRKLS) the chain is on the cytoplasmic side. Residues 7–27 (IFSAFVTFTMMIVLLMGGTVT) form a helical membrane-spanning segment. Residues 28–62 (KTDSGNGCGTDWPLCHGELIPTNPSVETMIEYSHR) are Extracellular-facing. A disulfide bond links Cys-35 and Cys-42. The active site involves Glu-58. His-61 is a binding site for heme o. The chain crosses the membrane as a helical span at residues 63-83 (AVTGVVGLLIIALCLWTLVAF). Residues 84 to 90 (KDRLDIK) are Cytoplasmic-facing. The chain crosses the membrane as a helical span at residues 91–111 (IFAFLAFIFMLIQSIVGAGAV). The Extracellular portion of the chain corresponds to 112–121 (VWQQSDLVMA). Residues 122-142 (LHFGISLISFASLLILTILIM) traverse the membrane as a helical segment. Residue His-123 coordinates heme o. Topologically, residues 143–160 (ERSGQEFRESVPAFLRKL) are cytoplasmic. Residues 161-181 (LYGLLIYTLIVVYTGAFVRHV) traverse the membrane as a helical segment. Residues 182–201 (GATYACVGWPVCSQPTMTFE) lie on the Extracellular side of the membrane. Cys-187 and Cys-193 are oxidised to a cystine. The helical transmembrane segment at 202–222 (AWVQMIHRILAGLLFFYTLFV) threads the bilayer. His-208 provides a ligand contact to heme b. Residues 223–236 (HYTAIRLKHRTSRT) lie on the Cytoplasmic side of the membrane. Residues 237–257 (GMLFATFFISCQVATGAWIVL) traverse the membrane as a helical segment. The Extracellular portion of the chain corresponds to 258-262 (GGHAT). Residues 263–283 (YVPLLHAFLITCYFGVISYLA) traverse the membrane as a helical segment. His-268 provides a ligand contact to heme b. Residues 284–297 (YHAFRTRKKDSRLR) are Cytoplasmic-facing.

It belongs to the COX15/CtaA family. Type 1 subfamily. Interacts with CtaB. The cofactor is heme b.

It localises to the cell membrane. The enzyme catalyses Fe(II)-heme o + 2 A + H2O = Fe(II)-heme a + 2 AH2. It functions in the pathway porphyrin-containing compound metabolism; heme A biosynthesis; heme A from heme O: step 1/1. Functionally, catalyzes the conversion of heme O to heme A by two successive hydroxylations of the methyl group at C8. The first hydroxylation forms heme I, the second hydroxylation results in an unstable dihydroxymethyl group, which spontaneously dehydrates, resulting in the formyl group of heme A. The chain is Heme A synthase from Exiguobacterium sibiricum (strain DSM 17290 / CCUG 55495 / CIP 109462 / JCM 13490 / 255-15).